Reading from the N-terminus, the 281-residue chain is ATP synthase gamma chain (281 aa).

Belongs to the ATPase gamma chain family. In terms of assembly, F-type ATPases have 2 components, CF(1) - the catalytic core - and CF(0) - the membrane proton channel. CF(1) has five subunits: alpha(3), beta(3), gamma(1), delta(1), epsilon(1). CF(0) has three main subunits: a, b and c.

Its subcellular location is the cell inner membrane. Its function is as follows. Produces ATP from ADP in the presence of a proton gradient across the membrane. The gamma chain is believed to be important in regulating ATPase activity and the flow of protons through the CF(0) complex. The chain is ATP synthase gamma chain from Ehrlichia chaffeensis (strain ATCC CRL-10679 / Arkansas).